Consider the following 150-residue polypeptide: Large ribosomal subunit protein bL9 (150 aa).

This sequence belongs to the bacterial ribosomal protein bL9 family.

Binds to the 23S rRNA. The sequence is that of Large ribosomal subunit protein bL9 from Paracidovorax citrulli (strain AAC00-1) (Acidovorax citrulli).